The primary structure comprises 850 residues: Lon protease (850 aa).

Residues 38 to 232 (LPVLPLRDVV…LLVGLVDGEI (195 aa)) enclose the Lon N-terminal domain. An ATP-binding site is contributed by 384–391 (GPPGVGKT). The 182-residue stretch at 634-815 (ENEIGLVTGL…DEVLDLALER (182 aa)) folds into the Lon proteolytic domain. Residues Ser-721 and Lys-764 contribute to the active site. The tract at residues 819-850 (PKKAGKEKARKTAPRVAVRGKSRSTPGTRVKH) is disordered. Positions 821–840 (KAGKEKARKTAPRVAVRGKS) are enriched in basic residues. The span at 841 to 850 (RSTPGTRVKH) shows a compositional bias: polar residues.

Belongs to the peptidase S16 family. In terms of assembly, homohexamer. Organized in a ring with a central cavity.

It is found in the cytoplasm. It carries out the reaction Hydrolysis of proteins in presence of ATP.. Functionally, ATP-dependent serine protease that mediates the selective degradation of mutant and abnormal proteins as well as certain short-lived regulatory proteins. Required for cellular homeostasis and for survival from DNA damage and developmental changes induced by stress. Degrades polypeptides processively to yield small peptide fragments that are 5 to 10 amino acids long. Binds to DNA in a double-stranded, site-specific manner. In Xanthomonas oryzae pv. oryzae (strain KACC10331 / KXO85), this protein is Lon protease.